The primary structure comprises 96 residues: Citrate lyase acyl carrier protein (96 aa).

S14 bears the O-(phosphoribosyl dephospho-coenzyme A)serine mark.

Belongs to the CitD family. In terms of assembly, oligomer with a subunit composition of (alpha,beta,gamma)6.

It is found in the cytoplasm. Functionally, covalent carrier of the coenzyme of citrate lyase. This chain is Citrate lyase acyl carrier protein, found in Pectobacterium carotovorum subsp. carotovorum (strain PC1).